A 254-amino-acid polypeptide reads, in one-letter code: Transcription factor CAULIFLOWER (254 aa).

Residues 1–61 form the MADS-box domain; sequence MGRGRVEMKR…GKLFEYSSES (61 aa). The K-box domain maps to 90–180; that stretch reads QTNWSMEYSR…TKQIKERESI (91 aa). Residues 182-191 show a composition bias toward polar residues; the sequence is RTHQNQSEQQ. Residues 182 to 205 are disordered; sequence RTHQNQSEQQNRSHHVAPQPQPQL.

In terms of assembly, homodimer capable of binding to CArG-box sequences.

The protein resides in the nucleus. Functionally, probable transcription factor that promotes early floral meristem identity in synergy with APETALA1, FRUITFULL and LEAFY. Is required subsequently for the transition of an inflorescence meristem into a floral meristem. Seems to be partially redundant to the function of APETALA1. This is Transcription factor CAULIFLOWER (CAL) from Brassica rapa subsp. chinensis (Pak-choi).